We begin with the raw amino-acid sequence, 210 residues long: Thiamine-phosphate synthase (210 aa).

4-amino-2-methyl-5-(diphosphooxymethyl)pyrimidine-binding positions include 39–43 (QLREK) and Asn-71. Mg(2+) is bound by residues Asp-72 and Asp-91. Ser-110 lines the 4-amino-2-methyl-5-(diphosphooxymethyl)pyrimidine pocket. 134–136 (TPT) lines the 2-[(2R,5Z)-2-carboxy-4-methylthiazol-5(2H)-ylidene]ethyl phosphate pocket. Lys-137 lines the 4-amino-2-methyl-5-(diphosphooxymethyl)pyrimidine pocket. Gly-163 contacts 2-[(2R,5Z)-2-carboxy-4-methylthiazol-5(2H)-ylidene]ethyl phosphate.

The protein belongs to the thiamine-phosphate synthase family. The cofactor is Mg(2+).

It catalyses the reaction 2-[(2R,5Z)-2-carboxy-4-methylthiazol-5(2H)-ylidene]ethyl phosphate + 4-amino-2-methyl-5-(diphosphooxymethyl)pyrimidine + 2 H(+) = thiamine phosphate + CO2 + diphosphate. The enzyme catalyses 2-(2-carboxy-4-methylthiazol-5-yl)ethyl phosphate + 4-amino-2-methyl-5-(diphosphooxymethyl)pyrimidine + 2 H(+) = thiamine phosphate + CO2 + diphosphate. The catalysed reaction is 4-methyl-5-(2-phosphooxyethyl)-thiazole + 4-amino-2-methyl-5-(diphosphooxymethyl)pyrimidine + H(+) = thiamine phosphate + diphosphate. It participates in cofactor biosynthesis; thiamine diphosphate biosynthesis; thiamine phosphate from 4-amino-2-methyl-5-diphosphomethylpyrimidine and 4-methyl-5-(2-phosphoethyl)-thiazole: step 1/1. Functionally, condenses 4-methyl-5-(beta-hydroxyethyl)thiazole monophosphate (THZ-P) and 2-methyl-4-amino-5-hydroxymethyl pyrimidine pyrophosphate (HMP-PP) to form thiamine monophosphate (TMP). In Campylobacter jejuni subsp. jejuni serotype O:2 (strain ATCC 700819 / NCTC 11168), this protein is Thiamine-phosphate synthase.